We begin with the raw amino-acid sequence, 64 residues long: U2-aranetoxin-Av1a (64 aa).

Expressed in fat body, but not in cephalothorax, silk gland, midgut.

In terms of biological role, insecticidal toxin. This chain is U2-aranetoxin-Av1a, found in Araneus ventricosus (Orbweaver spider).